The chain runs to 447 residues: Elongation factor 1-alpha (447 aa).

Positions 5-230 (KTHINIVVIG…DQINEPKRPS (226 aa)) constitute a tr-type G domain. Positions 14-21 (GHVDSGKS) are G1. Residue 14 to 21 (GHVDSGKS) coordinates GTP. N6,N6-dimethyllysine is present on K55. The G2 stretch occupies residues 70 to 74 (GITID). K79 is subject to N6,N6,N6-trimethyllysine. Residues 91-94 (DAPG) form a G3 region. GTP-binding positions include 91–95 (DAPGH) and 153–156 (NKMD). The segment at 153-156 (NKMD) is G4. Residue K187 is modified to N6,N6,N6-trimethyllysine. A G5 region spans residues 194-196 (SGF). Residue K261 is modified to N6-methyllysine. At E289 the chain carries 5-glutamyl glycerylphosphorylethanolamine. K306 is modified (N6,N6,N6-trimethyllysine). A 5-glutamyl glycerylphosphorylethanolamine modification is found at E362. K396 bears the N6,N6,N6-trimethyllysine mark.

Belongs to the TRAFAC class translation factor GTPase superfamily. Classic translation factor GTPase family. EF-Tu/EF-1A subfamily.

It localises to the cytoplasm. In terms of biological role, this protein promotes the GTP-dependent binding of aminoacyl-tRNA to the A-site of ribosomes during protein biosynthesis. This Oryza sativa subsp. japonica (Rice) protein is Elongation factor 1-alpha (REFA1).